The following is a 399-amino-acid chain: O-glucosyltransferase rumi homolog (399 aa).

The first 18 residues, 1–18 (MHFIIGIVICLSLSVIQS), serve as a signal peptide directing secretion. Residues N19 and N67 are each glycosylated (N-linked (GlcNAc...) asparagine). 4 disulfides stabilise this stretch: C66–C73, C71–C373, C118–C124, and C277–C300. D149 serves as the catalytic Proton donor/acceptor. Residues 189 to 194 (AIALYP) are interaction with the consensus sequence C-X-S-X-[PA]-C in peptide substrates. Residues 224–228 (RGSRT), R232, 271–273 (VTL), and 289–293 (AASFR) contribute to the UDP-alpha-D-glucose site.

It belongs to the glycosyltransferase 90 family.

It localises to the endoplasmic reticulum lumen. The protein resides in the secreted. It functions in the pathway protein modification; protein glycosylation. Its function is as follows. Protein O-glucosyltransferase. Catalyzes the reaction that attaches glucose through an O-glycosidic linkage to a conserved serine residue found in the consensus sequence C-X-S-X-[PA]-C in epidermal growth factor-like repeats. Regulates Notch signaling by glucosylating Notch in the ER, glucosylation is required for the correct folding and cleavage of Notch. The chain is O-glucosyltransferase rumi homolog from Anopheles gambiae (African malaria mosquito).